A 375-amino-acid polypeptide reads, in one-letter code: Queuine tRNA-ribosyltransferase (375 aa).

Aspartate 89 serves as the catalytic Proton acceptor. Substrate is bound by residues aspartate 89 to phenylalanine 93, aspartate 143, glutamine 185, and glycine 212. The segment at glycine 243–aspartate 249 is RNA binding. Aspartate 262 serves as the catalytic Nucleophile. The RNA binding; important for wobble base 34 recognition stretch occupies residues threonine 267–arginine 271. Zn(2+)-binding residues include cysteine 300, cysteine 302, cysteine 305, and histidine 331.

The protein belongs to the queuine tRNA-ribosyltransferase family. Homodimer. Within each dimer, one monomer is responsible for RNA recognition and catalysis, while the other monomer binds to the replacement base PreQ1. Zn(2+) is required as a cofactor.

It carries out the reaction 7-aminomethyl-7-carbaguanine + guanosine(34) in tRNA = 7-aminomethyl-7-carbaguanosine(34) in tRNA + guanine. It functions in the pathway tRNA modification; tRNA-queuosine biosynthesis. Functionally, catalyzes the base-exchange of a guanine (G) residue with the queuine precursor 7-aminomethyl-7-deazaguanine (PreQ1) at position 34 (anticodon wobble position) in tRNAs with GU(N) anticodons (tRNA-Asp, -Asn, -His and -Tyr). Catalysis occurs through a double-displacement mechanism. The nucleophile active site attacks the C1' of nucleotide 34 to detach the guanine base from the RNA, forming a covalent enzyme-RNA intermediate. The proton acceptor active site deprotonates the incoming PreQ1, allowing a nucleophilic attack on the C1' of the ribose to form the product. After dissociation, two additional enzymatic reactions on the tRNA convert PreQ1 to queuine (Q), resulting in the hypermodified nucleoside queuosine (7-(((4,5-cis-dihydroxy-2-cyclopenten-1-yl)amino)methyl)-7-deazaguanosine). This is Queuine tRNA-ribosyltransferase from Pseudoalteromonas translucida (strain TAC 125).